The following is a 460-amino-acid chain: MTGYSTNMRIKLPVFCLLLEFITIILFAVFVRYDHESDAKQWHDEMRNHSVQNAENDFYFRYPSFQDVHVMIFIGFGFLMTFLKRYGFSSVAFNFLIAAFGLQWSTLIQGFFHGFHDGKIHVGIESMINADFCTGAVLISFGAVLGKTSPVQLIVMTLIEVTLFGINEYIILNIVGAKDAGGSMTIHTFGAYFGLIVSRVLYRDDLEKSRQREGSVYHSDLFAMIGTIYLWMFWPSFNSAITAHGDDQHRTVMNTYYSLAACTLATFGFSALLNGEGKLDMVHIQNAALAGGVAVGTSGEMMLTPFGAMIAGTLAGMISVLGYKYLTPVLDSKLKIQDTCGVHNLHGMPGILGALIGAIVALFATAEIYGAGMEDVFPLISDGSRTAKQQSLYQFLALLVALGFAILGGLVVGFILKLPIFGTPSDAECFEDAVYWEVPGGEGHQQLTVVINNEDPDTQA.

Topologically, residues 1 to 10 (MTGYSTNMRI) are cytoplasmic. The helical transmembrane segment at 11–31 (KLPVFCLLLEFITIILFAVFV) threads the bilayer. Residues 32–62 (RYDHESDAKQWHDEMRNHSVQNAENDFYFRY) lie on the Extracellular side of the membrane. An N-linked (GlcNAc...) asparagine glycan is attached at Asn-48. A helical membrane pass occupies residues 63–83 (PSFQDVHVMIFIGFGFLMTFL). The Cytoplasmic portion of the chain corresponds to 84-87 (KRYG). Residues 88 to 108 (FSSVAFNFLIAAFGLQWSTLI) traverse the membrane as a helical segment. Residues 109 to 125 (QGFFHGFHDGKIHVGIE) are Extracellular-facing. Residues 126-146 (SMINADFCTGAVLISFGAVLG) form a helical membrane-spanning segment. Topologically, residues 147–150 (KTSP) are cytoplasmic. Residues 151–171 (VQLIVMTLIEVTLFGINEYII) traverse the membrane as a helical segment. Over 172–179 (LNIVGAKD) the chain is Extracellular. A helical transmembrane segment spans residues 180–202 (AGGSMTIHTFGAYFGLIVSRVLY). Over 203-220 (RDDLEKSRQREGSVYHSD) the chain is Cytoplasmic. Residues 221 to 241 (LFAMIGTIYLWMFWPSFNSAI) form a helical membrane-spanning segment. Topologically, residues 242-252 (TAHGDDQHRTV) are extracellular. A helical transmembrane segment spans residues 253–273 (MNTYYSLAACTLATFGFSALL). Over 274–283 (NGEGKLDMVH) the chain is Cytoplasmic. A helical transmembrane segment spans residues 284-304 (IQNAALAGGVAVGTSGEMMLT). Position 305 (Pro-305) is a topological domain, extracellular. The helical transmembrane segment at 306 to 326 (FGAMIAGTLAGMISVLGYKYL) threads the bilayer. Over 327–347 (TPVLDSKLKIQDTCGVHNLHG) the chain is Cytoplasmic. Residues 348–368 (MPGILGALIGAIVALFATAEI) form a helical membrane-spanning segment. Residues 369 to 394 (YGAGMEDVFPLISDGSRTAKQQSLYQ) lie on the Extracellular side of the membrane. The helical transmembrane segment at 395–415 (FLALLVALGFAILGGLVVGFI) threads the bilayer. At 416–460 (LKLPIFGTPSDAECFEDAVYWEVPGGEGHQQLTVVINNEDPDTQA) the chain is on the cytoplasmic side.

Belongs to the ammonium transporter (TC 2.A.49) family. Rh subfamily.

The protein resides in the basolateral cell membrane. The protein localises to the cytoplasmic vesicle membrane. In terms of biological role, functions as a specific ammonium transporter. The polypeptide is Ammonium transporter Rh type B (rhbg) (Xenopus tropicalis (Western clawed frog)).